We begin with the raw amino-acid sequence, 389 residues long: Glutamate 5-kinase (389 aa).

Lysine 16 contacts ATP. Serine 56, aspartate 143, and asparagine 155 together coordinate substrate. ATP is bound at residue 175–176 (SD). Residues 281 to 358 (AGELHVDDGA…AEIETILGYP (78 aa)) enclose the PUA domain.

The protein belongs to the glutamate 5-kinase family.

Its subcellular location is the cytoplasm. The enzyme catalyses L-glutamate + ATP = L-glutamyl 5-phosphate + ADP. Its pathway is amino-acid biosynthesis; L-proline biosynthesis; L-glutamate 5-semialdehyde from L-glutamate: step 1/2. Its function is as follows. Catalyzes the transfer of a phosphate group to glutamate to form L-glutamate 5-phosphate. In Rhizobium johnstonii (strain DSM 114642 / LMG 32736 / 3841) (Rhizobium leguminosarum bv. viciae), this protein is Glutamate 5-kinase.